Consider the following 508-residue polypeptide: Hydroxymethylglutaryl-CoA synthase, mitochondrial (508 aa).

The N-terminal 37 residues, 1–37 (MQRLLAPARRVLQVKRAMQETSLTPAHLLSAAQQRFS), are a transit peptide targeting the mitochondrion. Lys52 bears the N6-succinyllysine mark. (3S)-3-hydroxy-3-methylglutaryl-CoA-binding residues include Glu80 and Ala81. An N6-acetyllysine; alternate mark is found at Lys83 and Lys118. N6-succinyllysine; alternate is present on residues Lys83 and Lys118. Residue Glu132 is the Proton donor/acceptor of the active site. (3S)-3-hydroxy-3-methylglutaryl-CoA-binding residues include Cys166, Asn204, and Thr208. Residue Cys166 is the Acyl-thioester intermediate of the active site. The residue at position 221 (Lys221) is an N6-succinyllysine. Lys243 bears the N6-acetyllysine mark. Position 256 is an N6-acetyllysine; alternate (Lys256). Lys256 carries the N6-succinyllysine; alternate modification. Residues Ser258 and His301 each coordinate (3S)-3-hydroxy-3-methylglutaryl-CoA. His301 (proton donor/acceptor) is an active-site residue. Position 306 is an N6-acetyllysine (Lys306). Position 310 (Lys310) interacts with (3S)-3-hydroxy-3-methylglutaryl-CoA. Residues Lys310 and Lys327 each carry the N6-acetyllysine; alternate modification. Residues Lys310 and Lys327 each carry the N6-succinyllysine; alternate modification. Lys333 bears the N6-succinyllysine mark. Lys342, Lys350, Lys354, and Lys358 each carry N6-acetyllysine; alternate. N6-succinyllysine; alternate occurs at positions 342, 350, 354, and 358. The (3S)-3-hydroxy-3-methylglutaryl-CoA site is built by Asn380 and Ser414. The residue at position 427 (Lys427) is an N6-acetyllysine. Ser433 carries the phosphoserine modification. An N6-acetyllysine modification is found at Lys437. The residue at position 440 (Ser440) is a Phosphoserine. Lys447 is modified (N6-acetyllysine; alternate). Lys447 carries the N6-succinyllysine; alternate modification. Position 456 is a phosphoserine (Ser456). Lys473 carries the N6-acetyllysine; alternate modification. Lys473 is modified (N6-succinyllysine; alternate). At Ser477 the chain carries Phosphoserine.

Belongs to the thiolase-like superfamily. HMG-CoA synthase family. Homodimer. In terms of processing, acetylation of Lys-427 is observed in liver mitochondria from fasted mice but not from fed mice. Succinylated. Desuccinylated by SIRT5. Succinylation, at least at Lys-83 and Lys-310, inhibits the enzymatic activity. In terms of tissue distribution, liver and kidney.

The protein localises to the mitochondrion. It catalyses the reaction acetoacetyl-CoA + acetyl-CoA + H2O = (3S)-3-hydroxy-3-methylglutaryl-CoA + CoA + H(+). It participates in metabolic intermediate biosynthesis; (R)-mevalonate biosynthesis; (R)-mevalonate from acetyl-CoA: step 2/3. In terms of biological role, catalyzes the first irreversible step in ketogenesis, condensing acetyl-CoA to acetoacetyl-CoA to form HMG-CoA, which is converted by HMG-CoA reductase (HMGCR) into mevalonate. In Mus musculus (Mouse), this protein is Hydroxymethylglutaryl-CoA synthase, mitochondrial (Hmgcs2).